The primary structure comprises 662 residues: Potassium channel KAT3 (662 aa).

Residues 1-90 (MSTTTTEARS…HFDRRYRLWE (90 aa)) lie on the Cytoplasmic side of the membrane. The helical transmembrane segment at 91-111 (LFLVILVGYSAWASLFELAFE) threads the bilayer. At 112 to 118 (KAAEGAL) the chain is on the extracellular side. The chain crosses the membrane as a helical span at residues 119–139 (LTIDLVVDFFFAVDIILTFFV). The Cytoplasmic portion of the chain corresponds to 140–163 (SYLDNTTYLNVTDHKLIAKRYLKS). The chain crosses the membrane as a helical span at residues 164–184 (VAFVMDVASTLPIQFIYKTIT). At 185–194 (GDVGRGQAFG) the chain is on the extracellular side. The helical; Voltage-sensor transmembrane segment at 195–215 (FLNLLRLWRLRRVAELFKRLE) threads the bilayer. Over 216 to 229 (KDAHFNYFVIRVIK) the chain is Cytoplasmic. A helical transmembrane segment spans residues 230–250 (LLCVTIFWIHLAGCILYWIAY). Residues 251–277 (HYPRPTDTWIGSQVEDFKERSVWLGYT) lie on the Extracellular side of the membrane. Positions 278–297 (YSMYWSIVTLTTVGYGDLHA) form an intramembrane region, pore-forming. Topologically, residues 298-301 (VNSR) are extracellular. Residues 302–322 (EKTFNMFYMLFNIGLTSYIIG) traverse the membrane as a helical segment. Residues 323–662 (IMTNLVVHGA…LRENDHLYIF (340 aa)) are Cytoplasmic-facing. Residue 406–527 (LFKGFPEGLL…MIIANFMTYL (122 aa)) participates in a nucleoside 3',5'-cyclic phosphate binding. Residues 528–558 (KGLNDELKKEIPFLRDLLDDADAQVQETVQS) are a coiled coil. Residues 591–662 (RVIIHGQAPP…LRENDHLYIF (72 aa)) enclose the KHA domain.

The protein belongs to the potassium channel family. Plant (TC 1.A.1.4) subfamily. In terms of assembly, the potassium channel is probably composed of a homo- or heterotetrameric complex of pore-forming subunits. May interact with AKT1 and AKT2. Interacts with SLAC1. As to expression, expressed predominantly in root hairs and root endodermis and, at a lower level, in leaf nodes, trichomes, and hydathodes.

Its subcellular location is the membrane. Functionally, probable modulatory (alpha) subunit of inward-rectifying potassium channels. Could mediate potassium uptake from the soil solution by plant roots in association with AKT1. The polypeptide is Potassium channel KAT3 (KAT3) (Arabidopsis thaliana (Mouse-ear cress)).